The sequence spans 347 residues: Phenylalanine--tRNA ligase alpha subunit (347 aa).

Mg(2+) is bound at residue E268.

Belongs to the class-II aminoacyl-tRNA synthetase family. Phe-tRNA synthetase alpha subunit type 1 subfamily. As to quaternary structure, tetramer of two alpha and two beta subunits. It depends on Mg(2+) as a cofactor.

The protein localises to the cytoplasm. It carries out the reaction tRNA(Phe) + L-phenylalanine + ATP = L-phenylalanyl-tRNA(Phe) + AMP + diphosphate + H(+). This is Phenylalanine--tRNA ligase alpha subunit from Leptothrix cholodnii (strain ATCC 51168 / LMG 8142 / SP-6) (Leptothrix discophora (strain SP-6)).